We begin with the raw amino-acid sequence, 321 residues long: Quinol oxidase subunit 2 (321 aa).

A signal peptide spans 1-25 (MIFLFRALKPLLVLALLTVVFVLGG). C26 carries the N-palmitoyl cysteine lipid modification. C26 is lipidated: S-diacylglycerol cysteine. The next 2 membrane-spanning stretches (helical) occupy residues 49-69 (SIGFMLFIVGVVFVLFTIILV) and 90-110 (TFLEVVWTVIPILIVIALSVP). The disordered stretch occupies residues 294–321 (QAVSPHSKTDPFENVKENEFKKSDDTEE). Over residues 300-321 (SKTDPFENVKENEFKKSDDTEE) the composition is skewed to basic and acidic residues.

It belongs to the cytochrome c oxidase subunit 2 family.

The protein resides in the cell membrane. It carries out the reaction 2 a quinol + O2 = 2 a quinone + 2 H2O. Functionally, catalyzes quinol oxidation with the concomitant reduction of oxygen to water. Major component for energy conversion during vegetative growth. Subunit II transfers the electrons from a quinol to the binuclear center of the catalytic subunit I. The chain is Quinol oxidase subunit 2 (qoxA) from Bacillus spizizenii (strain ATCC 23059 / NRRL B-14472 / W23) (Bacillus subtilis subsp. spizizenii).